A 113-amino-acid polypeptide reads, in one-letter code: Transcriptional regulator RamA (113 aa).

Residues 9–107 (DTIVEWIDDN…NQPPGAYRKE (99 aa)) enclose the HTH araC/xylS-type domain. 2 DNA-binding regions (H-T-H motif) span residues 26–47 (DDIARHAGYSKWHLQRLFLQYK) and 74–97 (VYDICLKYGFDSQQTFTRVFTRTF).

As to quaternary structure, monomer. Interacts with the C-terminus of RNAP subunit RpoA when part of class I or class II promoter complexes. Also interacts with sigma-70/RpoD in class II promoter complexes.

Transcriptional regulator. Binds to regulatory regions of target genes, including its own gene, efflux pump operon acrAB, antisense RNA gene micF, and various genes involved in lipid A biosynthesis, including lpxO and lpxL-2. Regulates expression of many genes, perhaps including its own; activates various lipid A biosynthetic genes, and as a result of activating acrAB, confers multidrug resistance. Plays a role in virulence and survival in host cells. This Klebsiella pneumoniae subsp. pneumoniae (strain HS11286) protein is Transcriptional regulator RamA.